Consider the following 121-residue polypeptide: Large ribosomal subunit protein bL12 (121 aa).

Belongs to the bacterial ribosomal protein bL12 family. As to quaternary structure, homodimer. Part of the ribosomal stalk of the 50S ribosomal subunit. Forms a multimeric L10(L12)X complex, where L10 forms an elongated spine to which 2 to 4 L12 dimers bind in a sequential fashion. Binds GTP-bound translation factors.

Functionally, forms part of the ribosomal stalk which helps the ribosome interact with GTP-bound translation factors. Is thus essential for accurate translation. The polypeptide is Large ribosomal subunit protein bL12 (Ureaplasma urealyticum serovar 10 (strain ATCC 33699 / Western)).